Reading from the N-terminus, the 739-residue chain is Phosphoribosylformylglycinamidine synthase subunit PurL (739 aa).

H54 is a catalytic residue. ATP is bound by residues Y57 and K96. Mg(2+) is bound at residue E98. Substrate-binding positions include 99-102 (SHNH) and R121. H100 acts as the Proton acceptor in catalysis. Residue D122 participates in Mg(2+) binding. Residue Q245 coordinates substrate. D273 is a Mg(2+) binding site. Substrate is bound at residue 317–319 (ESQ). 2 residues coordinate ATP: D500 and G537. N538 lines the Mg(2+) pocket. S540 serves as a coordination point for substrate.

It belongs to the FGAMS family. In terms of assembly, monomer. Part of the FGAM synthase complex composed of 1 PurL, 1 PurQ and 2 PurS subunits.

The protein localises to the cytoplasm. It catalyses the reaction N(2)-formyl-N(1)-(5-phospho-beta-D-ribosyl)glycinamide + L-glutamine + ATP + H2O = 2-formamido-N(1)-(5-O-phospho-beta-D-ribosyl)acetamidine + L-glutamate + ADP + phosphate + H(+). The protein operates within purine metabolism; IMP biosynthesis via de novo pathway; 5-amino-1-(5-phospho-D-ribosyl)imidazole from N(2)-formyl-N(1)-(5-phospho-D-ribosyl)glycinamide: step 1/2. Part of the phosphoribosylformylglycinamidine synthase complex involved in the purines biosynthetic pathway. Catalyzes the ATP-dependent conversion of formylglycinamide ribonucleotide (FGAR) and glutamine to yield formylglycinamidine ribonucleotide (FGAM) and glutamate. The FGAM synthase complex is composed of three subunits. PurQ produces an ammonia molecule by converting glutamine to glutamate. PurL transfers the ammonia molecule to FGAR to form FGAM in an ATP-dependent manner. PurS interacts with PurQ and PurL and is thought to assist in the transfer of the ammonia molecule from PurQ to PurL. The polypeptide is Phosphoribosylformylglycinamidine synthase subunit PurL (Bacillus cereus (strain ATCC 10987 / NRS 248)).